A 456-amino-acid polypeptide reads, in one-letter code: Myricetin 3-O-rhamnosyltransferase UGT77B2 (456 aa).

Histidine 19 (proton acceptor) is an active-site residue. Histidine 19 contributes to the an anthocyanidin binding site. Residue aspartate 116 is the Charge relay of the active site. Histidine 147 is a binding site for an anthocyanidin. Threonine 279, alanine 334, histidine 351, asparagine 355, and glutamate 359 together coordinate UDP-beta-L-rhamnose. Alanine 374 contributes to the an anthocyanidin binding site.

Belongs to the UDP-glycosyltransferase family. In terms of tissue distribution, expressed in young cromes.

The enzyme catalyses myricetin + UDP-beta-L-rhamnose = myricetin 3-O-alpha-L-rhamnoside + UDP + H(+). The protein operates within flavonoid metabolism. In terms of biological role, rhamnosyltransferase involved in montbretin A (MbA) biosynthesis. Catalyzes the 3-O rhamnosylation of myricetin to produce myricetin 3-O-alpha-L-rhamnoside (MR), a precursor of MbA. MbA is a potent inhibitor of human pancreatic alpha-amylase and is being developed as drug candidate to treat type-2 diabetes. In vitro, is able to transfer UDP-glucose and UDP-xylose with 50-fold less efficiency compared with UDP-rhamnose. In vitro, can use kaempferol or quercetin as substrates, although these two flavonols may not be physiological substrates in vivo. The protein is Myricetin 3-O-rhamnosyltransferase UGT77B2 of Crocosmia x crocosmiiflora (Montbretia).